The sequence spans 173 residues: MANPVQPQLQDPGSTSPLDLPEMEKLLTKVENKDDQALNLSKSLSGALDLEQNGHSLPFKVISEGHRQPSLSGSPSRASSRRASSVVTTSYAQDQEAPKDYLVLAIASCFCPVWPLNLIPLIFSIMSRSSVQQGDLDGARRLGRLARLLSITFIILGIVIIIVAVTVNFTVPK.

Polar residues predominate over residues 1–17 (MANPVQPQLQDPGSTSP). Residues 1–22 (MANPVQPQLQDPGSTSPLDLPE) are disordered. Topologically, residues 1–102 (MANPVQPQLQ…QDQEAPKDYL (102 aa)) are cytoplasmic. Serine 16, serine 43, serine 45, serine 70, serine 84, and serine 85 each carry phosphoserine. The helical intramembrane region spans 103 to 123 (VLAIASCFCPVWPLNLIPLIF). The Cytoplasmic portion of the chain corresponds to 124-150 (SIMSRSSVQQGDLDGARRLGRLARLLS). Residues 151 to 171 (ITFIILGIVIIIVAVTVNFTV) form a helical membrane-spanning segment. Residues 172–173 (PK) lie on the Extracellular side of the membrane.

Belongs to the CD225/Dispanin family. As to quaternary structure, interacts with SLC2A4; the interaction is required for proper SLC2A4 reacycling after insulin stimulation. As to expression, present in adipose tissue and undetectable in other tissues (at protein level).

It is found in the cell membrane. It localises to the endomembrane system. The protein resides in the cytoplasm. Its subcellular location is the perinuclear region. Regulates insulin-mediated adipose tissue glucose uptake and transport by modulation of SLC2A4 recycling. Not required for SLC2A4 membrane fusion upon an initial stimulus, but rather is necessary for proper protein recycling during prolonged insulin stimulation. This is Trafficking regulator of GLUT4 1 from Rattus norvegicus (Rat).